The sequence spans 61 residues: Weak toxin CM-2a (61 aa).

4 disulfide bridges follow: Cys3-Cys19, Cys12-Cys37, Cys41-Cys49, and Cys50-Cys55.

The protein belongs to the three-finger toxin family. Short-chain subfamily. Orphan group XX sub-subfamily. In terms of tissue distribution, expressed by the venom gland.

It is found in the secreted. This is Weak toxin CM-2a from Naja annulifera (Banded Egyptian cobra).